Consider the following 360-residue polypeptide: tRNA N6-adenosine threonylcarbamoyltransferase (360 aa).

Fe cation-binding residues include H115 and H119. Residues 137-141 (LVSGG), D170, G183, and N283 contribute to the substrate site. Position 311 (D311) interacts with Fe cation.

Belongs to the KAE1 / TsaD family. Requires Fe(2+) as cofactor.

The protein localises to the cytoplasm. It carries out the reaction L-threonylcarbamoyladenylate + adenosine(37) in tRNA = N(6)-L-threonylcarbamoyladenosine(37) in tRNA + AMP + H(+). Functionally, required for the formation of a threonylcarbamoyl group on adenosine at position 37 (t(6)A37) in tRNAs that read codons beginning with adenine. Is involved in the transfer of the threonylcarbamoyl moiety of threonylcarbamoyl-AMP (TC-AMP) to the N6 group of A37, together with TsaE and TsaB. TsaD likely plays a direct catalytic role in this reaction. The protein is tRNA N6-adenosine threonylcarbamoyltransferase of Sinorhizobium medicae (strain WSM419) (Ensifer medicae).